We begin with the raw amino-acid sequence, 387 residues long: 1-deoxy-D-xylulose 5-phosphate reductoisomerase (387 aa).

T11, G12, S13, I14, G37, R38, N39, and N125 together coordinate NADPH. Residue K126 participates in 1-deoxy-D-xylulose 5-phosphate binding. E127 contacts NADPH. Residue D151 coordinates Mn(2+). 1-deoxy-D-xylulose 5-phosphate contacts are provided by S152, E153, S177, and H200. Residue E153 participates in Mn(2+) binding. NADPH is bound at residue G206. 1-deoxy-D-xylulose 5-phosphate-binding residues include S213, N218, K219, and E222. Mn(2+) is bound at residue E222.

Belongs to the DXR family. It depends on Mg(2+) as a cofactor. Mn(2+) is required as a cofactor.

The enzyme catalyses 2-C-methyl-D-erythritol 4-phosphate + NADP(+) = 1-deoxy-D-xylulose 5-phosphate + NADPH + H(+). It participates in isoprenoid biosynthesis; isopentenyl diphosphate biosynthesis via DXP pathway; isopentenyl diphosphate from 1-deoxy-D-xylulose 5-phosphate: step 1/6. Functionally, catalyzes the NADPH-dependent rearrangement and reduction of 1-deoxy-D-xylulose-5-phosphate (DXP) to 2-C-methyl-D-erythritol 4-phosphate (MEP). The protein is 1-deoxy-D-xylulose 5-phosphate reductoisomerase of Desulforamulus reducens (strain ATCC BAA-1160 / DSM 100696 / MI-1) (Desulfotomaculum reducens).